Consider the following 702-residue polypeptide: Polyribonucleotide nucleotidyltransferase (702 aa).

2 residues coordinate Mg(2+): D487 and D493. A KH domain is found at 554–613 (PRLLTIKIHPDKIREVIGKGGSTIQAITKETGTQIDIQDDGTIVIASVNAIAAQAAKARI). The 69-residue stretch at 623 to 691 (GRIYEGKVAK…KQGRIRLSMK (69 aa)) folds into the S1 motif domain.

It belongs to the polyribonucleotide nucleotidyltransferase family. In terms of assembly, component of the RNA degradosome, which is a multiprotein complex involved in RNA processing and mRNA degradation. Mg(2+) is required as a cofactor.

The protein resides in the cytoplasm. It catalyses the reaction RNA(n+1) + phosphate = RNA(n) + a ribonucleoside 5'-diphosphate. Involved in mRNA degradation. Catalyzes the phosphorolysis of single-stranded polyribonucleotides processively in the 3'- to 5'-direction. The chain is Polyribonucleotide nucleotidyltransferase from Stenotrophomonas maltophilia (strain R551-3).